The chain runs to 219 residues: 2-C-methyl-D-erythritol 4-phosphate cytidylyltransferase (219 aa).

The protein belongs to the IspD/TarI cytidylyltransferase family. IspD subfamily.

The enzyme catalyses 2-C-methyl-D-erythritol 4-phosphate + CTP + H(+) = 4-CDP-2-C-methyl-D-erythritol + diphosphate. It functions in the pathway isoprenoid biosynthesis; isopentenyl diphosphate biosynthesis via DXP pathway; isopentenyl diphosphate from 1-deoxy-D-xylulose 5-phosphate: step 2/6. In terms of biological role, catalyzes the formation of 4-diphosphocytidyl-2-C-methyl-D-erythritol from CTP and 2-C-methyl-D-erythritol 4-phosphate (MEP). The polypeptide is 2-C-methyl-D-erythritol 4-phosphate cytidylyltransferase (Chlamydia trachomatis serovar L2 (strain ATCC VR-902B / DSM 19102 / 434/Bu)).